The sequence spans 268 residues: Undecaprenyl-diphosphatase (268 aa).

Transmembrane regions (helical) follow at residues 47–67 (FAIL…FFKL), 83–103 (FIIG…IAGK), 109–129 (LFDP…LLWV), 144–164 (YPLM…IPGV), 184–204 (AAEF…VYDF), 218–238 (LIAI…KAFL), and 246–266 (FVLF…ALAL).

It belongs to the UppP family.

The protein resides in the cell inner membrane. It carries out the reaction di-trans,octa-cis-undecaprenyl diphosphate + H2O = di-trans,octa-cis-undecaprenyl phosphate + phosphate + H(+). Its function is as follows. Catalyzes the dephosphorylation of undecaprenyl diphosphate (UPP). Confers resistance to bacitracin. In Bradyrhizobium sp. (strain ORS 278), this protein is Undecaprenyl-diphosphatase.